The following is a 391-amino-acid chain: Succinyl-diaminopimelate desuccinylase (391 aa).

Histidine 67 is a binding site for Zn(2+). The active site involves aspartate 69. Aspartate 101 serves as a coordination point for Zn(2+). Glutamate 135 functions as the Proton acceptor in the catalytic mechanism. Positions 136, 164, and 353 each coordinate Zn(2+).

It belongs to the peptidase M20A family. DapE subfamily. Homodimer. It depends on Zn(2+) as a cofactor. Co(2+) serves as cofactor.

It carries out the reaction N-succinyl-(2S,6S)-2,6-diaminopimelate + H2O = (2S,6S)-2,6-diaminopimelate + succinate. The protein operates within amino-acid biosynthesis; L-lysine biosynthesis via DAP pathway; LL-2,6-diaminopimelate from (S)-tetrahydrodipicolinate (succinylase route): step 3/3. In terms of biological role, catalyzes the hydrolysis of N-succinyl-L,L-diaminopimelic acid (SDAP), forming succinate and LL-2,6-diaminopimelate (DAP), an intermediate involved in the bacterial biosynthesis of lysine and meso-diaminopimelic acid, an essential component of bacterial cell walls. This chain is Succinyl-diaminopimelate desuccinylase, found in Rickettsia bellii (strain OSU 85-389).